The following is a 199-amino-acid chain: DnaJ homolog subfamily C member 5B (199 aa).

Phosphoserine is present on Ser14. Residues Ala19–Gly84 form the J domain.

Interacts with the chaperone complex consisting of HSC70 and SGTA. Palmitoylated. Palmitoylation is not required for membrane association. As to expression, testis specific.

The protein resides in the membrane. This is DnaJ homolog subfamily C member 5B (DNAJC5B) from Homo sapiens (Human).